Here is a 230-residue protein sequence, read N- to C-terminus: Sugar fermentation stimulation protein homolog (230 aa).

This sequence belongs to the SfsA family.

The polypeptide is Sugar fermentation stimulation protein homolog (Clostridium perfringens (strain SM101 / Type A)).